Here is a 266-residue protein sequence, read N- to C-terminus: Short-chain dehydrogenase/reductase atnB (266 aa).

Residues Ile13, Asp57, and Asn85 each contribute to the NADP(+) site. Catalysis depends on proton donor residues Ser147 and Tyr166. Positions 166, 170, 199, and 201 each coordinate NADP(+). Lys170 serves as the catalytic Lowers pKa of active site Tyr.

The protein belongs to the short-chain dehydrogenases/reductases (SDR) family.

Its pathway is secondary metabolite biosynthesis; terpenoid biosynthesis. Functionally, short-chain dehydrogenase/reductase; part of the gene cluster that mediates the biosynthesis of the meroterpenoids arthripenoids. The pathway begins with the HR-PKS atnH that catalyzes two chain-extension steps to form a reduced triketide, which then primes the SAT domain in the NR-PKS atnG to initiate three more cycles of extension to give a linear hexaketide corresponding to the polyketide part of arthripenoids. The FAD-dependent monooxygenase atnJ then performs an oxidative decarboxylation at C11 of the atnH/atnG product, via an electrophilic aromatic hydroxylation with concomitant ipso-decarboxylation. The membrane-bound polyprenyl transferase atnF then introduces a farnesyl group before the FAD-dependent monooxygenase atnK functions as the first epoxidase on terminal C12'-C13' olefin, followed by a second epoxidation on C7'-C8' catalyzed by atnA. The terpene cyclase/mutase atnI then initiates the sequential tricyclic ring formation through protonation of the terminal epoxide and catalyzes the regioselective and stereoselective 6/6/6-tricyclic ring formation. The cytochrome P450 monooxygenase atnM is responsible for hydroxylating both C1' and C10'. The next steps may involve ketoreduction and acetyl transfer by the ketoreductase atnB and the acetyltransferase atnC, and lead to the production of arthripenoid B, the final biosynthetic product of the atn cluster. The hydroquinone moiety in arthripenoid B is prone to undergo spontaneous oxidation to afford a benzoquinone compound, a key intermediate for generating structure diversity. For instance, addition of a cysteine followed by ring contraction gives arthripenoid A, tautomerization gives the main product arthripenoid C, addition of a molecular of water or amine affords arthripenoid D or E, respectively, and loss of one water forms arthripenoid F. This chain is Short-chain dehydrogenase/reductase atnB, found in Arthrinium sp.